A 735-amino-acid polypeptide reads, in one-letter code: Putative RNA polymerase II subunit B1 CTD phosphatase RPAP2 homolog (735 aa).

The RTR1-type zinc finger occupies 33–118 (AARKLMSRSD…LQEARTLEFD (86 aa)). Zn(2+) contacts are provided by cysteine 56, cysteine 61, cysteine 94, and cysteine 98. Disordered regions lie at residues 179–201 (VPFD…QEKH), 349–374 (GKNT…KSRK), and 519–538 (EHSE…WPNK). Low complexity predominate over residues 349–364 (GKNTLSGSSSGSNTKG). Residues 519–530 (EHSEEEMTEEEP) show a composition bias toward acidic residues.

Belongs to the RPAP2 family.

The protein resides in the nucleus. The catalysed reaction is O-phospho-L-seryl-[protein] + H2O = L-seryl-[protein] + phosphate. The enzyme catalyses O-phospho-L-threonyl-[protein] + H2O = L-threonyl-[protein] + phosphate. Putative RNA polymerase II subunit B1 C-terminal domain (CTD) phosphatase involved in RNA polymerase II transcription regulation. This Arabidopsis thaliana (Mouse-ear cress) protein is Putative RNA polymerase II subunit B1 CTD phosphatase RPAP2 homolog.